A 115-amino-acid polypeptide reads, in one-letter code: Somatostatin-2 (115 aa).

Positions 1–18 (MKVCRIHCALALLGLALA) are cleaved as a signal peptide. Positions 19-87 (ICSQGAASQP…KEDLRVELER (69 aa)) are excised as a propeptide. A disulfide bridge links Cys104 with Cys115.

The protein belongs to the somatostatin family.

It is found in the secreted. In terms of biological role, somatostatin inhibits the release of somatotropin. In Oncorhynchus mykiss (Rainbow trout), this protein is Somatostatin-2 (sst2).